Consider the following 406-residue polypeptide: Testis-specific Y-encoded-like protein 4 (406 aa).

Disordered regions lie at residues 1–63, 81–121, 161–189, and 387–406; these read MNGV…EHCG, GLED…AKPK, EAGA…TRPR, and VRVP…FQSG. The segment covering 8 to 20 has biased composition (polar residues); sequence NELSLANTTTPSH. Residues 93–102 show a composition bias toward low complexity; that stretch reads DAPSAPVAAD. Basic and acidic residues predominate over residues 167–188; it reads QEKKGLQKEKKVAGGGKEETRP.

Belongs to the nucleosome assembly protein (NAP) family.

The polypeptide is Testis-specific Y-encoded-like protein 4 (Tspyl4) (Mus musculus (Mouse)).